A 191-amino-acid chain; its full sequence is uncharacterized protein (191 aa).

An N-terminal signal peptide occupies residues 1-23 (MKKTMSAITAAAAVTSCFTGFGA).

This is an uncharacterized protein from Bacillus subtilis (strain 168).